An 83-amino-acid polypeptide reads, in one-letter code: Small ribosomal subunit protein bS16 (83 aa).

Belongs to the bacterial ribosomal protein bS16 family.

This is Small ribosomal subunit protein bS16 from Acidovorax ebreus (strain TPSY) (Diaphorobacter sp. (strain TPSY)).